The following is a 669-amino-acid chain: MYRRSYVFQARQERYERAQPAGPAAQPGGTAPGLAALQALGERVAVQVQRARALQQRHAGLRRQLDAFQRLGEQPGPEDALARHVEANLQRARDLTAEHARLERQEAEAQRALDEFRSKYENECECQLVLKEMLERLNKEADEALLRNLHLQLEAQFLQADISVAKDRYKKNLLEIQTYITVLQQIVQTAPQVSLVTGMRESGLLMQEKLFTEREVAALQNQLEEGREAVTHLQAQKAELQAQTTALEQAIKHAHECYDEELQLYNEQIENLRKEIEEAERSLERSSYDCRQLAVAQQTLRNELDRYHRIIEIEGSRLSSVFIETPISLITPSHGAPLSLGSSVKDLARAVQDITAAKPRQKALPKSLPKRKEIIAQDKVEETLEDAPLKPPQEPKALQVERKAEGGSQPGAGGGHGVSPTQEGGPEDVPDGGQISKAFGKLCKVVKERVSGHKEPEPEPPTDLFTKGRHVLVTGESSFVDPEFYSSSIPARGGVVISIEEDSMHHDGHVEPSPGQPMPPVENGQGVPQGREGDHSNHQQGTDKNGLRAKEPKDLEEKDDDGKKEAEGSRRPCPVIIPGPDEPSTSHSQTSGSNQGGPVGPASKSSSLLAKGPSKALSIKKVEVVESIEKISTESIQTYEETSVIVETLIGKSKGNKKLGEKSLPDTRA.

Residues 1–33 (MYRRSYVFQARQERYERAQPAGPAAQPGGTAPG) form a head region. Residue Ser-5 is modified to Phosphoserine. The IF rod domain maps to 33 to 318 (GLAALQALGE…RIIEIEGSRL (286 aa)). Positions 34 to 68 (LAALQALGERVAVQVQRARALQQRHAGLRRQLDAF) are coil 1A. Ala-35 is modified (N-acetylalanine). The tract at residues 69–77 (QRLGEQPGP) is linker 1. Positions 78 to 177 (EDALARHVEA…RYKKNLLEIQ (100 aa)) are coil 1B. The segment at 178-194 (TYITVLQQIVQTAPQVS) is linker 12. The interval 195-318 (LVTGMRESGL…RIIEIEGSRL (124 aa)) is coil 2. Residues 319 to 669 (SSVFIETPIS…GEKSLPDTRA (351 aa)) form a tail region. Position 339 is a phosphoserine (Ser-339). Disordered regions lie at residues 380 to 435 (VEET…GGQI), 449 to 468 (RVSGHKEPEPEPPTDLFTKG), and 505 to 618 (HHDG…KALS). A compositionally biased stretch (gly residues) spans 408 to 417 (SQPGAGGGHG). Gly-432 carries the N-myristoyl glycine lipid modification. Ser-513 bears the Phosphoserine mark. Basic and acidic residues predominate over residues 545–570 (NGLRAKEPKDLEEKDDDGKKEAEGSR). A compositionally biased stretch (polar residues) spans 583–593 (PSTSHSQTSGS). Thr-585 carries the post-translational modification Phosphothreonine.

The protein belongs to the intermediate filament family. Part of a complex required for lens intermediate filament formation composed of BFSP1, BFSP2 and CRYAA. Identified in a complex that contains VIM, EZR, AHNAK, BFSP1, BFSP2, ANK2, PLEC, PRX and spectrin. Found in a complex composed of PPL (via C-terminal linker domain), BFSP1 and BFSP2 in the retinal lens. Within the complex interacts with BFSP2. Interacts (via C-terminus) with MIP (via C-terminus) in aged lens fiber cells. In terms of processing, proteolytically cleaved during lens cell fiber differentiation with increased fragmentation as fiber cell age increases. Myristoylated at Gly-432 following proteolytic cleavage at Asp-431. Post-translationally, acetylated at Ala-35 following proteolytic cleavage at Leu-34. In terms of tissue distribution, detected in eye lens fiber cells (at protein level). Expressed in retinal lens epithelial cells (at protein level).

The protein resides in the cell membrane. It is found in the cytoplasm. The protein localises to the cytoskeleton. It localises to the cell cortex. Required for the correct formation of lens intermediate filaments as part of a complex composed of BFSP1, BFSP2 and CRYAA. Involved in altering the calcium regulation of MIP water permeability. This is Filensin (Bfsp1) from Mus musculus (Mouse).